The chain runs to 564 residues: MDIKPVILNPRSKNITEGKSRAPNRSMYYAMGYEADDFKKPMIGVANGHSTITPCNSGLQKLADAAIAAIEEAGGNAQVFGTPTISDGMSMGTEGMKYSLVSREVISDCIETCVQGQWMDGVLVIGGCDKNMPGGLMGMLRANVPAIYVYGGTILPGHYKGQDLNIVSVFEAVGENAAGRMSDEDLLEIERRAIPGPGSCGGMYTANTMSSAFEALGISLVYSSTMANPHDEKLNSAQESAKVLIEAIKNDLKPRDIVTRKSIENAIAVVMAIGGSTNAVLHFLAIAHAAGVEWTIDDFERVRQKTPVLCDLKPSGKYLAVDLHRAGGIPQVMKMLLSAGLLHGDCITITGQTVAEVLKDVPDAPRADQNVIRPMNKPMYAQGHLAILKGNLAPEGCVAKITGLKNPVMTGPARVFEDEQSALAAILANKIVAGDVMVLRYLGPKGGPGMPEMLAPTGALVGQGLGESVGLITDGRFSGGTWGMVVGHVAPEAAAGGLIALIEEGDSITIDAHQLLLQLNVSDDIIAKRRSVWTAPQPRYTRGVQAKFAFNASTASKGAVLDNY.

A [2Fe-2S] cluster-binding site is contributed by cysteine 55. Aspartate 87 is a binding site for Mg(2+). Cysteine 128 provides a ligand contact to [2Fe-2S] cluster. Mg(2+)-binding residues include aspartate 129 and lysine 130. Lysine 130 carries the post-translational modification N6-carboxylysine. Cysteine 200 is a binding site for [2Fe-2S] cluster. Residue glutamate 452 participates in Mg(2+) binding. The Proton acceptor role is filled by serine 478.

Belongs to the IlvD/Edd family. As to quaternary structure, homodimer. The cofactor is [2Fe-2S] cluster. Mg(2+) serves as cofactor.

It carries out the reaction (2R)-2,3-dihydroxy-3-methylbutanoate = 3-methyl-2-oxobutanoate + H2O. It catalyses the reaction (2R,3R)-2,3-dihydroxy-3-methylpentanoate = (S)-3-methyl-2-oxopentanoate + H2O. The protein operates within amino-acid biosynthesis; L-isoleucine biosynthesis; L-isoleucine from 2-oxobutanoate: step 3/4. It participates in amino-acid biosynthesis; L-valine biosynthesis; L-valine from pyruvate: step 3/4. Functionally, functions in the biosynthesis of branched-chain amino acids. Catalyzes the dehydration of (2R,3R)-2,3-dihydroxy-3-methylpentanoate (2,3-dihydroxy-3-methylvalerate) into 2-oxo-3-methylpentanoate (2-oxo-3-methylvalerate) and of (2R)-2,3-dihydroxy-3-methylbutanoate (2,3-dihydroxyisovalerate) into 2-oxo-3-methylbutanoate (2-oxoisovalerate), the penultimate precursor to L-isoleucine and L-valine, respectively. The chain is Dihydroxy-acid dehydratase from Albidiferax ferrireducens (strain ATCC BAA-621 / DSM 15236 / T118) (Rhodoferax ferrireducens).